The primary structure comprises 416 residues: Serine hydroxymethyltransferase (416 aa).

Residues leucine 118 and 122–124 contribute to the (6S)-5,6,7,8-tetrahydrofolate site; that span reads GHL. Residue lysine 226 is modified to N6-(pyridoxal phosphate)lysine. Residues glutamate 242 and 350–352 contribute to the (6S)-5,6,7,8-tetrahydrofolate site; that span reads SPF.

This sequence belongs to the SHMT family. As to quaternary structure, homodimer. Requires pyridoxal 5'-phosphate as cofactor.

The protein resides in the cytoplasm. The catalysed reaction is (6R)-5,10-methylene-5,6,7,8-tetrahydrofolate + glycine + H2O = (6S)-5,6,7,8-tetrahydrofolate + L-serine. It functions in the pathway one-carbon metabolism; tetrahydrofolate interconversion. The protein operates within amino-acid biosynthesis; glycine biosynthesis; glycine from L-serine: step 1/1. In terms of biological role, catalyzes the reversible interconversion of serine and glycine with tetrahydrofolate (THF) serving as the one-carbon carrier. This reaction serves as the major source of one-carbon groups required for the biosynthesis of purines, thymidylate, methionine, and other important biomolecules. Also exhibits THF-independent aldolase activity toward beta-hydroxyamino acids, producing glycine and aldehydes, via a retro-aldol mechanism. This Helicobacter pylori (strain G27) protein is Serine hydroxymethyltransferase.